The following is a 299-amino-acid chain: MSRKTLYELQAENVRKTYLFIVTFSLILFAIGYFFVWYFNWGLTGIVLLAIFIVLYNWIAYEQSDKIALASVGAIPANPEEYYVLHNIVEEVALAAGIPKPNVYIMEESQPNAFATGKDPKHASVCVTTGLLQMMNREELQGVIAHEISHIRNRDILLMTVVAVVAGLIILLRDVMLRSMWWGMGESRRRDKNDNGAIILLIIGLIFSIIAPLIVLIIRSAISRQREYLADATGAFIVRDPYGLASALEKIGSYTRPMRVTSDATAHLFISNPFGRAEKLFATHPPIEERIKRLKSLTM.

2 helical membrane passes run 19–39 and 41–61; these read LFIV…VWYF and WGLT…WIAY. H146 contributes to the Zn(2+) binding site. E147 is a catalytic residue. H150 contributes to the Zn(2+) binding site. A run of 2 helical transmembrane segments spans residues 156–176 and 198–218; these read ILLM…RDVM and IILL…VLII. Residue E227 coordinates Zn(2+).

It belongs to the peptidase M48B family. The cofactor is Zn(2+).

It localises to the cell membrane. In Thermoanaerobacter pseudethanolicus (strain ATCC 33223 / 39E) (Clostridium thermohydrosulfuricum), this protein is Protease HtpX homolog.